The following is a 523-amino-acid chain: Tubulin-specific chaperone E (523 aa).

In terms of domain architecture, CAP-Gly spans 31 to 75 (GEVSGHMGSWLGIEWDDGLRGKHNGIVDGKRYFQTQTPTGGSFIR). LRR repeat units lie at residues 155-180 (LTHLTTLNVSHTLIWNWEIVASIAQQ), 181-204 (LPSLTNLNLSSNRLVLPTSSQITE), 209-232 (FRQLKRINLRSCGFSDWKDVMHTA), 235-258 (WPNILSLGLQENSLGQLAEVDRTK), 260-284 (FKQLHELDLHRTNIMDFDQVTKLGN), 285-310 (LTTLRLLNIMENGIEEIKLPDCDSQE), and 315-337 (FVSLEQLNLLHNPIWNEADAFNE).

Belongs to the TBCE family.

The protein localises to the cytoplasm. Its function is as follows. Tubulin-folding protein which is required for the development of the neuronal microtubule network. Essential for the development and function of neuromuscular synapses. Likely to promote microtubule formation by acting in the negative regulation of the microtubule-severing protein spas. In Drosophila melanogaster (Fruit fly), this protein is Tubulin-specific chaperone E.